A 436-amino-acid chain; its full sequence is GTPase Der (436 aa).

2 consecutive EngA-type G domains span residues 4 to 167 (PIVA…KEEE) and 176 to 351 (IRLS…ENHK). GTP is bound by residues 10–17 (GRPNVGKS), 57–61 (DTGGI), 119–122 (NKVD), 182–189 (GRPNVGKS), 229–233 (DTAGM), and 294–297 (NKWD). The region spanning 352–436 (KRVQSSTLNE…PVHIIARKRN (85 aa)) is the KH-like domain.

The protein belongs to the TRAFAC class TrmE-Era-EngA-EngB-Septin-like GTPase superfamily. EngA (Der) GTPase family. In terms of assembly, associates with the 50S ribosomal subunit.

GTPase that plays an essential role in the late steps of ribosome biogenesis. This Staphylococcus saprophyticus subsp. saprophyticus (strain ATCC 15305 / DSM 20229 / NCIMB 8711 / NCTC 7292 / S-41) protein is GTPase Der.